The primary structure comprises 589 residues: Arginine--tRNA ligase (589 aa).

Positions 131-141 (ANPTGPLHVGH) match the 'HIGH' region motif.

The protein belongs to the class-I aminoacyl-tRNA synthetase family. As to quaternary structure, monomer.

The protein localises to the cytoplasm. It carries out the reaction tRNA(Arg) + L-arginine + ATP = L-arginyl-tRNA(Arg) + AMP + diphosphate. The chain is Arginine--tRNA ligase from Legionella pneumophila (strain Paris).